We begin with the raw amino-acid sequence, 430 residues long: Tyrosine--tRNA ligase (430 aa).

Tyr32 lines the L-tyrosine pocket. The 'HIGH' region signature appears at 37–46 (PTADSLHIGH). L-tyrosine contacts are provided by Tyr172 and Gln176. The 'KMSKS' region signature appears at 232–236 (KFGKT). Lys235 is an ATP binding site. One can recognise an S4 RNA-binding domain in the interval 362-430 (ISLVDLLADA…KKSYYLIIVE (69 aa)).

The protein belongs to the class-I aminoacyl-tRNA synthetase family. TyrS type 1 subfamily. As to quaternary structure, homodimer.

Its subcellular location is the cytoplasm. The enzyme catalyses tRNA(Tyr) + L-tyrosine + ATP = L-tyrosyl-tRNA(Tyr) + AMP + diphosphate + H(+). Functionally, catalyzes the attachment of tyrosine to tRNA(Tyr) in a two-step reaction: tyrosine is first activated by ATP to form Tyr-AMP and then transferred to the acceptor end of tRNA(Tyr). The chain is Tyrosine--tRNA ligase from Porphyromonas gingivalis (strain ATCC BAA-308 / W83).